Reading from the N-terminus, the 248-residue chain is Agamous-like MADS-box protein AGL1 (248 aa).

The region spanning 18 to 72 is the MADS-box domain; sequence RGKIEIKRIENTTNRQVTFCKRRNGLLKKAYELSVLCDAEVALVIFSTRGRLYEY. The K-box domain occupies 102 to 192; sequence TQYYQQEASK…RAKIAEGARL (91 aa).

In terms of assembly, interacts with AGL15 and AGL16.

The protein localises to the nucleus. Probable transcription factor. Interacts genetically with TT16/AGL32 in a partially antagonistic manner during flower development. Is essential for the coordination of cell divisions in ovule, seed coat development and endosperm formation. This chain is Agamous-like MADS-box protein AGL1 (AGL1), found in Arabidopsis thaliana (Mouse-ear cress).